The primary structure comprises 487 residues: V-type proton ATPase subunit B3 (487 aa).

The protein belongs to the ATPase alpha/beta chains family. V-ATPase is a heteromultimeric enzyme composed of a peripheral catalytic V1 complex (components A to H) attached to an integral membrane V0 proton pore complex (components: a, c, c'', d and e).

The protein localises to the vacuole membrane. Functionally, non-catalytic subunit of the peripheral V1 complex of vacuolar ATPase. V-ATPase is responsible for acidifying a variety of intracellular compartments in eukaryotic cells. This Arabidopsis thaliana (Mouse-ear cress) protein is V-type proton ATPase subunit B3 (VHA-B3).